The chain runs to 632 residues: Fem-3 mRNA-binding factor 2 (632 aa).

Residues 1–11 (MDQSKMRRTNQ) show a composition bias toward basic residues. The disordered stretch occupies residues 1–37 (MDQSKMRRTNQFRKTSQKPPSTGIDSYPTPAQSPMAQ). Over residues 12–35 (FRKTSQKPPSTGIDSYPTPAQSPM) the composition is skewed to polar residues. The PUM-HD domain occupies 162–566 (TRSNNVLPTW…KMIETLANLR (405 aa)). Pumilio repeat units lie at residues 187–225 (EVLD…QLFE), 226–264 (QVIG…GYTK), 271–307 (NFIS…KLVQ), 308–332 (ALPR…QKVV), 345–384 (DFVA…DLTS), 400–436 (SVTN…CIIE), 438–473 (CLMR…EMMD), and 484–521 (DTGK…RQTK). The disordered stretch occupies residues 609–632 (MLEPRSNKSSVSVKFSSSGSHGDD). Residues 615–632 (NKSSVSVKFSSSGSHGDD) are compositionally biased toward low complexity.

Interacts (via C-terminus) with gld-3 isoform A in an RNA-independent manner. Interacts with dlc-1, and is required for the localization of fbf-2 to P granules. Interacts (via RNA-binding domain) with lst-1, probably displaces bound auto-inhibitory C-terminal tail and alters its RNA-binding affinity. Expressed specifically in the germline (at protein level).

The protein resides in the cytoplasm. The protein localises to the cytoplasmic granule. Functionally, RNA-binding protein that binds to the consensus sequence 5'-UGUGCCAUA-3' in mRNA 3'-UTRs. Involved in the control of stem cells and sex determination in the C.elegans hermaphrodite germline. May also play a role in the hermaphrodite germline proliferation and oogenesis. By binding to the 3'-UTR, represses phosphatase lip-1 expression in the distal part of the germline mitotic zone. Binds specifically to the regulatory region of fem-3 3'-UTR and mediates the sperm/oocyte switch. Negatively regulates gld-3 expression possibly by directly binding to two sites within the gld-3 isoform b 3'-UTR. Suppresses germline tumor formation by preventing the dedifferentiation of secondary spermatocytes. C-terminal disordered region probably auto-inhibits RNA binding; auto-inhibition may be reversed by interaction with lst-1. The protein is Fem-3 mRNA-binding factor 2 of Caenorhabditis elegans.